The chain runs to 309 residues: CDK-activating kinase assembly factor MAT1 (309 aa).

M1 carries the N-acetylmethionine modification. An RING-type zinc finger spans residues 6–50 (CPRCKTTKYRNPSLKLMVNVCGHTLCESCVDLLFVRGAGNCPECG). A Phosphothreonine modification is found at T51. The UIM domain occupies 142 to 161 (REQEELEEALEVERQEHEQR). S279 bears the Phosphoserine mark.

As to quaternary structure, associates primarily with CDK7 and cyclin H to form the CAK complex. CAK can further associate with the core-TFIIH to form the TFIIH basal transcription factor.

It is found in the nucleus. In terms of biological role, stabilizes the cyclin H-CDK7 complex to form a functional CDK-activating kinase (CAK) enzymatic complex. CAK activates the cyclin-associated kinases CDK1, CDK2, CDK4 and CDK6 by threonine phosphorylation. CAK complexed to the core-TFIIH basal transcription factor activates RNA polymerase II by serine phosphorylation of the repetitive C-terminal domain (CTD) of its large subunit (POLR2A), allowing its escape from the promoter and elongation of the transcripts. Involved in cell cycle control and in RNA transcription by RNA polymerase II. The protein is CDK-activating kinase assembly factor MAT1 (Mnat1) of Mus musculus (Mouse).